The primary structure comprises 38 residues: Large ribosomal subunit protein bL36 (38 aa).

It belongs to the bacterial ribosomal protein bL36 family.

The sequence is that of Large ribosomal subunit protein bL36 from Hamiltonella defensa subsp. Acyrthosiphon pisum (strain 5AT).